We begin with the raw amino-acid sequence, 162 residues long: Interleukin-15 (162 aa).

The N-terminal stretch at 1–29 (MRILKPHLRSTSIQCYLCLLLNSHFLTEA) is a signal peptide. Residues 30 to 48 (GIHVFILGCISAGLPKTEA) constitute a propeptide that is removed on maturation. Disulfide bonds link Cys83–Cys133 and Cys90–Cys136. N-linked (GlcNAc...) asparagine glycosylation is present at Asn108.

This sequence belongs to the IL-15/IL-21 family.

Its subcellular location is the secreted. Functionally, cytokine that plays a major role in the development of inflammatory and protective immune responses to microbial invaders and parasites by modulating immune cells of both the innate and adaptive immune systems. Stimulates the proliferation of natural killer cells, T-cells and B-cells and promotes the secretion of several cytokines. In monocytes, induces the production of IL8 and monocyte chemotactic protein 1/CCL2, two chemokines that attract neutrophils and monocytes respectively to sites of infection. Unlike most cytokines, which are secreted in soluble form, IL15 is expressed in association with its high affinity IL15RA on the surface of IL15-producing cells and delivers signals to target cells that express IL2RB and IL2RG receptor subunits. Binding to its receptor triggers the phosphorylation of JAK1 and JAK3 and the recruitment and subsequent phosphorylation of signal transducer and activator of transcription-3/STAT3 and STAT5. In mast cells, induces the rapid tyrosine phosphorylation of STAT6 and thereby controls mast cell survival and release of cytokines such as IL4. This chain is Interleukin-15 (IL15), found in Ailuropoda melanoleuca (Giant panda).